A 329-amino-acid polypeptide reads, in one-letter code: T-cell acute lymphocytic leukemia protein 1 homolog (329 aa).

Disordered stretches follow at residues 1 to 28 (MTERPPSEAARSDPQLEGQDAAEARMAP), 40 to 78 (ETSRAAPAEPPVIELGARSGAGGGPASGGGAARDLKGRD), and 91 to 125 (TELCRPPGPAPAPAPASAPAELPGDGRMVQLSPPA). Ser-12 carries the phosphoserine modification. Gly residues predominate over residues 58-70 (SGAGGGPASGGGA). Over residues 96–106 (PPGPAPAPAPA) the composition is skewed to pro residues. Ser-122 is subject to Phosphoserine; by MAPK. Ser-172 carries the phosphoserine modification. In terms of domain architecture, bHLH spans 187–239 (VRRIFTNSRERWRQQNVNGAFAELRKLIPTHPPDKKLSKNEILRLAMKYINFL). Positions 247–329 (EEEGTQRAKP…LPAADGAGPR (83 aa)) are disordered. Over residues 263–273 (GAGGGGAGGGI) the composition is skewed to gly residues. The span at 317 to 329 (PALLPAADGAGPR) shows a compositional bias: low complexity.

As to quaternary structure, efficient DNA binding requires dimerization with another bHLH protein. Forms heterodimers with TCF3. Binds to the LIM domain containing protein LMO2 and to DRG1. Can assemble in a complex with LDB1 and LMO2. Component of a TAL-1 complex composed at least of CBFA2T3, LDB1, TAL1 and TCF3. Interacts with SBNO2; this interaction inhibits TAL1 occupancy of the DCSTAMP promoter, leading to the activation of the DCSTAMP promoter by the transcription factor MITF. Phosphorylated on serine residues. Phosphorylation of Ser-122 by MAPK is strongly stimulated by hypoxia. Post-translationally, ubiquitinated; subsequent to hypoxia-dependent phosphorylation of Ser-122, ubiquitination targets the protein for rapid degradation via the ubiquitin system. This process may be characteristic for microvascular endothelial cells, since it could not be observed in large vessel endothelial cells. As to expression, erythroid and myeloid cells.

It is found in the nucleus. Functionally, implicated in the genesis of hemopoietic malignancies. It may play an important role in hemopoietic differentiation. Serves as a positive regulator of erythroid differentiation. This is T-cell acute lymphocytic leukemia protein 1 homolog (Tal1) from Mus musculus (Mouse).